The chain runs to 194 residues: Xanthine phosphoribosyltransferase (194 aa).

Residues Leu-20 and Asn-27 each contribute to the xanthine site. Residue 128–132 (ANGQA) coordinates 5-phospho-alpha-D-ribose 1-diphosphate. Residue Lys-156 participates in xanthine binding.

It belongs to the purine/pyrimidine phosphoribosyltransferase family. Xpt subfamily. Homodimer.

It localises to the cytoplasm. It catalyses the reaction XMP + diphosphate = xanthine + 5-phospho-alpha-D-ribose 1-diphosphate. The protein operates within purine metabolism; XMP biosynthesis via salvage pathway; XMP from xanthine: step 1/1. Converts the preformed base xanthine, a product of nucleic acid breakdown, to xanthosine 5'-monophosphate (XMP), so that it can be reused for RNA or DNA synthesis. The sequence is that of Xanthine phosphoribosyltransferase (xpt) from Bacillus subtilis (strain 168).